Reading from the N-terminus, the 241-residue chain is 2,3-bisphosphoglycerate-dependent phosphoglycerate mutase (241 aa).

Catalysis depends on H12, which acts as the Tele-phosphohistidine intermediate. Substrate contacts are provided by residues 24 to 25 (SG), R61, 117 to 120 (ERYY), and K128. The Proton donor/acceptor role is filled by E117.

This sequence belongs to the phosphoglycerate mutase family. BPG-dependent PGAM subfamily.

It carries out the reaction (2R)-2-phosphoglycerate = (2R)-3-phosphoglycerate. It participates in carbohydrate degradation; glycolysis; pyruvate from D-glyceraldehyde 3-phosphate: step 3/5. Functionally, catalyzes the interconversion of 2-phosphoglycerate and 3-phosphoglycerate. The sequence is that of 2,3-bisphosphoglycerate-dependent phosphoglycerate mutase from Methanosarcina mazei (strain ATCC BAA-159 / DSM 3647 / Goe1 / Go1 / JCM 11833 / OCM 88) (Methanosarcina frisia).